Here is a 203-residue protein sequence, read N- to C-terminus: MIGKLSGKVDSQGDDYVIIDVNGVGYLVYASDKTLGTLAEGEFYKLFIETHVREEHMHLYGFLTLEEKIFFNLLQSVNGIGTRMALFILSSLTPSDIQIAVNNEDKNIFKAISGVGAKLAERIVLELKGKVAKISSGSAIIKESLNIKNITPVASNEVIKALVNLGFSRFEAQNAVQGIITQNPEISIDELIKTALKNRNSNF.

The interval 1–63 is domain I; it reads MIGKLSGKVD…EEHMHLYGFL (63 aa). Residues 64–142 are domain II; that stretch reads TLEEKIFFNL…KISSGSAIIK (79 aa). A flexible linker region spans residues 143-149; it reads ESLNIKN. The domain III stretch occupies residues 150–203; it reads ITPVASNEVIKALVNLGFSRFEAQNAVQGIITQNPEISIDELIKTALKNRNSNF.

It belongs to the RuvA family. As to quaternary structure, homotetramer. Forms an RuvA(8)-RuvB(12)-Holliday junction (HJ) complex. HJ DNA is sandwiched between 2 RuvA tetramers; dsDNA enters through RuvA and exits via RuvB. An RuvB hexamer assembles on each DNA strand where it exits the tetramer. Each RuvB hexamer is contacted by two RuvA subunits (via domain III) on 2 adjacent RuvB subunits; this complex drives branch migration. In the full resolvosome a probable DNA-RuvA(4)-RuvB(12)-RuvC(2) complex forms which resolves the HJ.

The protein resides in the cytoplasm. The RuvA-RuvB-RuvC complex processes Holliday junction (HJ) DNA during genetic recombination and DNA repair, while the RuvA-RuvB complex plays an important role in the rescue of blocked DNA replication forks via replication fork reversal (RFR). RuvA specifically binds to HJ cruciform DNA, conferring on it an open structure. The RuvB hexamer acts as an ATP-dependent pump, pulling dsDNA into and through the RuvAB complex. HJ branch migration allows RuvC to scan DNA until it finds its consensus sequence, where it cleaves and resolves the cruciform DNA. This chain is Holliday junction branch migration complex subunit RuvA, found in Rickettsia peacockii (strain Rustic).